A 274-amino-acid chain; its full sequence is tRNA-cytidine(32) 2-sulfurtransferase (274 aa).

A PP-loop motif motif is present at residues 40–45 (SGGKDS). Positions 115, 118, and 206 each coordinate [4Fe-4S] cluster.

The protein belongs to the TtcA family. In terms of assembly, homodimer. It depends on Mg(2+) as a cofactor. [4Fe-4S] cluster is required as a cofactor.

It is found in the cytoplasm. It carries out the reaction cytidine(32) in tRNA + S-sulfanyl-L-cysteinyl-[cysteine desulfurase] + AH2 + ATP = 2-thiocytidine(32) in tRNA + L-cysteinyl-[cysteine desulfurase] + A + AMP + diphosphate + H(+). Its pathway is tRNA modification. Functionally, catalyzes the ATP-dependent 2-thiolation of cytidine in position 32 of tRNA, to form 2-thiocytidine (s(2)C32). The sulfur atoms are provided by the cysteine/cysteine desulfurase (IscS) system. The polypeptide is tRNA-cytidine(32) 2-sulfurtransferase (Pseudomonas fluorescens (strain Pf0-1)).